The primary structure comprises 82 residues: ATP synthase subunit c (82 aa).

2 helical membrane-spanning segments follow: residues 7 to 27 (FVAL…CIGI) and 53 to 73 (FLLA…AMMF).

This sequence belongs to the ATPase C chain family. As to quaternary structure, F-type ATPases have 2 components, F(1) - the catalytic core - and F(0) - the membrane proton channel. F(1) has five subunits: alpha(3), beta(3), gamma(1), delta(1), epsilon(1). F(0) has three main subunits: a(1), b(2) and c(10-14). The alpha and beta chains form an alternating ring which encloses part of the gamma chain. F(1) is attached to F(0) by a central stalk formed by the gamma and epsilon chains, while a peripheral stalk is formed by the delta and b chains.

It is found in the cell inner membrane. In terms of biological role, f(1)F(0) ATP synthase produces ATP from ADP in the presence of a proton or sodium gradient. F-type ATPases consist of two structural domains, F(1) containing the extramembraneous catalytic core and F(0) containing the membrane proton channel, linked together by a central stalk and a peripheral stalk. During catalysis, ATP synthesis in the catalytic domain of F(1) is coupled via a rotary mechanism of the central stalk subunits to proton translocation. Functionally, key component of the F(0) channel; it plays a direct role in translocation across the membrane. A homomeric c-ring of between 10-14 subunits forms the central stalk rotor element with the F(1) delta and epsilon subunits. This chain is ATP synthase subunit c, found in Aromatoleum aromaticum (strain DSM 19018 / LMG 30748 / EbN1) (Azoarcus sp. (strain EbN1)).